Here is a 93-residue protein sequence, read N- to C-terminus: uncharacterized protein (93 aa).

A signal peptide spans 1–22; that stretch reads MSIPNLSSVTQLLSIATGLVST. Asn5 carries N-linked (GlcNAc...) asparagine; by host glycosylation.

This is an uncharacterized protein from Invertebrate iridescent virus 6 (IIV-6).